Consider the following 88-residue polypeptide: Probable Fe(2+)-trafficking protein (88 aa).

It belongs to the Fe(2+)-trafficking protein family.

In terms of biological role, could be a mediator in iron transactions between iron acquisition and iron-requiring processes, such as synthesis and/or repair of Fe-S clusters in biosynthetic enzymes. The sequence is that of Probable Fe(2+)-trafficking protein from Alkalilimnicola ehrlichii (strain ATCC BAA-1101 / DSM 17681 / MLHE-1).